The chain runs to 165 residues: Lipoprotein signal peptidase (165 aa).

The next 2 membrane-spanning stretches (helical) occupy residues 64–84 (LGRWLLVGVAVLAAAALGAWM) and 88–108 (GSRLLVLSLGLIVGGAVGNAV). Catalysis depends on residues D118 and D136. Residues 128 to 148 (SWYVFNVADAGIVAGVAGLLV) form a helical membrane-spanning segment.

It belongs to the peptidase A8 family.

It is found in the cell inner membrane. It carries out the reaction Release of signal peptides from bacterial membrane prolipoproteins. Hydrolyzes -Xaa-Yaa-Zaa-|-(S,diacylglyceryl)Cys-, in which Xaa is hydrophobic (preferably Leu), and Yaa (Ala or Ser) and Zaa (Gly or Ala) have small, neutral side chains.. Its pathway is protein modification; lipoprotein biosynthesis (signal peptide cleavage). Functionally, this protein specifically catalyzes the removal of signal peptides from prolipoproteins. This chain is Lipoprotein signal peptidase, found in Methylobacterium sp. (strain 4-46).